Consider the following 161-residue polypeptide: 3-isopropylmalate dehydratase small subunit 1 (161 aa).

Belongs to the LeuD family. LeuD type 2 subfamily. In terms of assembly, heterodimer of LeuC and LeuD.

The catalysed reaction is (2R,3S)-3-isopropylmalate = (2S)-2-isopropylmalate. It participates in amino-acid biosynthesis; L-leucine biosynthesis; L-leucine from 3-methyl-2-oxobutanoate: step 2/4. Its function is as follows. Catalyzes the isomerization between 2-isopropylmalate and 3-isopropylmalate, via the formation of 2-isopropylmaleate. This Archaeoglobus fulgidus (strain ATCC 49558 / DSM 4304 / JCM 9628 / NBRC 100126 / VC-16) protein is 3-isopropylmalate dehydratase small subunit 1 (leuD1).